The primary structure comprises 394 residues: Elongation factor Tu (394 aa).

Residues 10-204 (KPHINVGTIG…AMDNYIPIPE (195 aa)) enclose the tr-type G domain. Positions 19–26 (GHVDHGKT) are G1. 19–26 (GHVDHGKT) contacts GTP. Thr-26 provides a ligand contact to Mg(2+). Residues 60 to 64 (GITIN) form a G2 region. Positions 81 to 84 (DCPG) are G3. Residues 81–85 (DCPGH) and 136–139 (NKVD) each bind GTP. The segment at 136–139 (NKVD) is G4. A G5 region spans residues 174–176 (SAL).

The protein belongs to the TRAFAC class translation factor GTPase superfamily. Classic translation factor GTPase family. EF-Tu/EF-1A subfamily. In terms of assembly, monomer.

The protein localises to the cytoplasm. The enzyme catalyses GTP + H2O = GDP + phosphate + H(+). Its function is as follows. GTP hydrolase that promotes the GTP-dependent binding of aminoacyl-tRNA to the A-site of ribosomes during protein biosynthesis. This is Elongation factor Tu from Methylacidiphilum infernorum (isolate V4) (Methylokorus infernorum (strain V4)).